The following is a 304-amino-acid chain: Recombination-associated protein RdgC (304 aa).

This sequence belongs to the RdgC family.

Its subcellular location is the cytoplasm. It is found in the nucleoid. Functionally, may be involved in recombination. The sequence is that of Recombination-associated protein RdgC from Shewanella sp. (strain ANA-3).